Here is a 162-residue protein sequence, read N- to C-terminus: Balbiani ring protein 2 (162 aa).

Residues 1-31 (CDDAMRKTESDKCTNIGGKFDPSTCKCTPET) are last constant region. The last Cys-1 repeat stretch occupies residues 32–51 (VTEGPTTCLESSESDEVTTK). Positions 52 to 162 (KPCDCTCAPD…VKGLEDILNS (111 aa)) are unique region.

In terms of tissue distribution, salivary gland.

It localises to the secreted. Functionally, used by the larvae to construct a supramolecular structure, the larval tube. The protein is Balbiani ring protein 2 (BR2) of Chironomus pallidivittatus (Midge).